A 291-amino-acid polypeptide reads, in one-letter code: Kidney mitochondrial carrier protein 1 (291 aa).

Ser-2 bears the N-acetylserine mark. Solcar repeat units follow at residues Lys-7–Leu-96, Glu-104–His-189, and Asp-198–Leu-289. 6 consecutive transmembrane segments (helical) span residues Phe-9–Ile-26, Gly-71–Thr-89, Leu-106–Ala-124, Gly-164–Tyr-183, Phe-204–Val-224, and Gly-264–Tyr-283.

This sequence belongs to the mitochondrial carrier (TC 2.A.29) family. As to quaternary structure, interacts with VDAC1.

It localises to the mitochondrion inner membrane. The enzyme catalyses sulfite(in) + sulfate(out) = sulfite(out) + sulfate(in). The catalysed reaction is thiosulfate(in) + sulfate(out) = thiosulfate(out) + sulfate(in). It carries out the reaction sulfate(out) + phosphate(in) = sulfate(in) + phosphate(out). It catalyses the reaction oxalate(in) + sulfate(out) = oxalate(out) + sulfate(in). The enzyme catalyses malonate(in) + sulfate(out) = malonate(out) + sulfate(in). The catalysed reaction is maleate(in) + sulfate(out) = maleate(out) + sulfate(in). It carries out the reaction (S)-malate(in) + sulfate(out) = (S)-malate(out) + sulfate(in). It catalyses the reaction (3S)-citramalate(in) + sulfate(out) = (3S)-citramalate(out) + sulfate(in). The enzyme catalyses (3R)-citramalate(in) + sulfate(out) = (3R)-citramalate(out) + sulfate(in). The catalysed reaction is sulfate(out) + succinate(in) = sulfate(in) + succinate(out). It carries out the reaction (S,S)-tartrate(in) + sulfate(out) = (S,S)-tartrate(out) + sulfate(in). It catalyses the reaction (2R,3R)-tartrate(in) + sulfate(out) = (2R,3R)-tartrate(out) + sulfate(in). The enzyme catalyses D-aspartate(in) + sulfate(out) = D-aspartate(out) + sulfate(in). The catalysed reaction is L-aspartate(in) + sulfate(out) = L-aspartate(out) + sulfate(in). It carries out the reaction sulfate(in) = sulfate(out). It catalyses the reaction phosphate(in) = phosphate(out). The enzyme catalyses (S)-malate(out) = (S)-malate(in). In terms of biological role, antiporter that transports inorganic anions (sulfate, sulfite, thiosulfate and phosphate) and, to a lesser extent, a variety of dicarboxylates (e.g. malonate, malate and citramalate) and, even more so, aspartate. The sulfate/sulfate exchange is much higher than the phosphate/phosphate and malate/malate exchanges. The transport affinities is higher for sulfate and thiosulfate than for any other substrate. May catalyze the export of sulfite and thiosulfate (the hydrogen sulfide degradation products) from the mitochondria, thereby modulating the level of the hydrogen sulfide. Also may mediate a very low unidirectional transport of sulfate, phosphate and (S)-malate. This chain is Kidney mitochondrial carrier protein 1, found in Rattus norvegicus (Rat).